Consider the following 211-residue polypeptide: Endo-1,4-beta-xylanase 4 (211 aa).

A signal peptide spans M1–A16. In terms of domain architecture, GH11 spans V19–S210. An N-linked (GlcNAc...) asparagine glycan is attached at N101. The Nucleophile role is filled by E106. Catalysis depends on E197, which acts as the Proton donor.

This sequence belongs to the glycosyl hydrolase 11 (cellulase G) family.

The protein resides in the secreted. The catalysed reaction is Endohydrolysis of (1-&gt;4)-beta-D-xylosidic linkages in xylans.. It participates in glycan degradation; xylan degradation. Endo-1,4-beta-xylanase involved in the hydrolysis of xylan, a major structural heterogeneous polysaccharide found in plant biomass representing the second most abundant polysaccharide in the biosphere, after cellulose. The polypeptide is Endo-1,4-beta-xylanase 4 (XYN4) (Aspergillus niger).